A 341-amino-acid polypeptide reads, in one-letter code: Ribosomal RNA small subunit methyltransferase C (341 aa).

The protein belongs to the methyltransferase superfamily. RsmC family. As to quaternary structure, monomer.

The protein localises to the cytoplasm. It carries out the reaction guanosine(1207) in 16S rRNA + S-adenosyl-L-methionine = N(2)-methylguanosine(1207) in 16S rRNA + S-adenosyl-L-homocysteine + H(+). In terms of biological role, specifically methylates the guanine in position 1207 of 16S rRNA in the 30S particle. The sequence is that of Ribosomal RNA small subunit methyltransferase C from Shewanella amazonensis (strain ATCC BAA-1098 / SB2B).